Reading from the N-terminus, the 1140-residue chain is DNA damage-binding protein 1 (1140 aa).

Position 2 is an N-acetylserine (Ser2). The tract at residues 2 to 768 (SYNYVVTAQK…QALSSSVSSS (767 aa)) is interaction with CDT1. The WD repeat beta-propeller A stretch occupies residues 13–356 (TAVNGCVTGH…VVAMETFTNL (344 aa)). The tract at residues 392-708 (NGIGIHEHAS…LTIGTIDEIQ (317 aa)) is WD repeat beta-propeller B; Interaction with CUL4A. The segment at 709–1043 (KLHIRTVPLY…NGMIGLVTSL (335 aa)) is WD repeat beta-propeller C. Positions 771–1140 (FSSSTAPHET…KVVEELTRIH (370 aa)) are interaction with CDT1 and CUL4A. Residue Lys1067 is modified to N6-acetyllysine. Residue Lys1121 forms a Glycyl lysine isopeptide (Lys-Gly) (interchain with G-Cter in SUMO2) linkage. Thr1125 carries the phosphothreonine modification.

The protein belongs to the DDB1 family. Component of the UV-DDB complex which includes DDB1 and DDB2; the heterodimer dimerizes to give rise to a heterotetramer when bound to damaged DNA. The UV-DDB complex interacts with monoubiquitinated histone H2A and binds to XPC via the DDB2 subunit. Component of numerous DCX (DDB1-CUL4-X-box) E3 ubiquitin-protein ligase complexes which consist of a core of DDB1, CUL4A or CUL4B and RBX1. DDB1 may recruit specific substrate targeting subunits to the DCX complex. These substrate targeting subunits are generally known as DCAF (DDB1- and CUL4-associated factor) or CDW (CUL4-DDB1-associated WD40-repeat) proteins. Interacts with AMBRA1, ATG16L1, BTRC, CRBN, DCAF1, DCAF4, DCAF5, DCAF6, DCAF7, DCAF8, DCAF9, DCAF10, DCAF11, DCAF12, DCAF15, DCAF16, DCAF17, DDA1, DET1, DTL, ERCC8, FBXW5, FBXW8, GRWD1, KATNB1, NLE1, NUP43, PAFAH1B1, PHIP, PWP1, RBBP4, RBBP5, RBBP7, COP1, SNRNP40, DCAF1, WDR5, WDR5B, WDR12, WDR26, WDR39, WDR42, WDR53, WDR59, WDR61, WSB1, WSB2, LRWD1 and WDTC1. DCX complexes may associate with the COP9 signalosome, and this inhibits the E3 ubiquitin-protein ligase activity of the complex. Interacts with NF2, TSC1 and TSC2. Interacts with AGO1 and AGO2. Associates with the E3 ligase complex containing DYRK2, EDD/UBR5, DDB1 and DCAF1 proteins (EDVP complex). Interacts directly with DYRK2. DCX(DTL) complex interacts with FBXO11; does not ubiquitinate and degradate FBXO11. Interacts with TRPC4AP. Interacts with CRY1 and CRY2. The DDB1-CUL4A complex interacts with CRY1. May also interact with DCUN1D1, DCUN1D2, DCUN1D3 and DCUN1D5. Component of the DCX(DCAF13) E3 ubiquitin ligase complex, at least composed of CUL4 (CUL4A or CUL4B), DDB1, DCAF13 and RBX1. Interacts with DCAF13 (via WD40 domain). As to quaternary structure, (Microbial infection) Interacts with Simian virus 5 protein V. In terms of assembly, (Microbial infection) Interacts with hepatitis B virus protein HBX; the viral protein contains a short helical motif that competes for the same binding site as the N-terminal helical motif found in endogenous DCAF proteins. (Microbial infection) Interacts with human cytomegalovirus protein UL145; this interaction promotes STAT2 degradation. As to quaternary structure, (Microbial infection) Interacts with human cytomegalovirus protein RL1; this interaction allows RL1 to recruit the cullin4-RING E3 ubiquitin ligase (CRL4) complex and promote SLN11 degradation. Phosphorylated by ABL1. In terms of processing, ubiquitinated by CUL4A. Subsequently degraded by ubiquitin-dependent proteolysis. Post-translationally, acetylated, promoting interaction with CUL4 (CUL4A or CUL4B) and subsequent formation of DCX (DDB1-CUL4-X-box) E3 ubiquitin-protein ligase complexes. Deacetylation by SIRT7 impairs the interaction with CUL4 (CUL4A or CUL4B) and formation of DCX (DDB1-CUL4-X-box) E3 ubiquitin-protein ligase complexes.

The protein localises to the cytoplasm. The protein resides in the nucleus. The protein operates within protein modification; protein ubiquitination. Protein, which is both involved in DNA repair and protein ubiquitination, as part of the UV-DDB complex and DCX (DDB1-CUL4-X-box) complexes, respectively. Core component of the UV-DDB complex (UV-damaged DNA-binding protein complex), a complex that recognizes UV-induced DNA damage and recruit proteins of the nucleotide excision repair pathway (the NER pathway) to initiate DNA repair. The UV-DDB complex preferentially binds to cyclobutane pyrimidine dimers (CPD), 6-4 photoproducts (6-4 PP), apurinic sites and short mismatches. Also functions as a component of numerous distinct DCX (DDB1-CUL4-X-box) E3 ubiquitin-protein ligase complexes which mediate the ubiquitination and subsequent proteasomal degradation of target proteins. The functional specificity of the DCX E3 ubiquitin-protein ligase complex is determined by the variable substrate recognition component recruited by DDB1. DCX(DDB2) (also known as DDB1-CUL4-ROC1, CUL4-DDB-ROC1 and CUL4-DDB-RBX1) may ubiquitinate histone H2A, histone H3 and histone H4 at sites of UV-induced DNA damage. The ubiquitination of histones may facilitate their removal from the nucleosome and promote subsequent DNA repair. DCX(DDB2) also ubiquitinates XPC, which may enhance DNA-binding by XPC and promote NER. DCX(DTL) plays a role in PCNA-dependent polyubiquitination of CDT1 and MDM2-dependent ubiquitination of TP53 in response to radiation-induced DNA damage and during DNA replication. DCX(ERCC8) (the CSA complex) plays a role in transcription-coupled repair (TCR). The DDB1-CUL4A-DTL E3 ligase complex regulates the circadian clock function by mediating the ubiquitination and degradation of CRY1. DDB1-mediated CRY1 degradation promotes FOXO1 protein stability and FOXO1-mediated gluconeogenesis in the liver. By acting on TET dioxygenses, essential for oocyte maintenance at the primordial follicle stage, hence essential for female fertility. Maternal factor required for proper zygotic genome activation and genome reprogramming. The polypeptide is DNA damage-binding protein 1 (DDB1) (Homo sapiens (Human)).